Here is a 195-residue protein sequence, read N- to C-terminus: Imidazoleglycerol-phosphate dehydratase (195 aa).

It belongs to the imidazoleglycerol-phosphate dehydratase family.

The protein localises to the cytoplasm. It catalyses the reaction D-erythro-1-(imidazol-4-yl)glycerol 3-phosphate = 3-(imidazol-4-yl)-2-oxopropyl phosphate + H2O. Its pathway is amino-acid biosynthesis; L-histidine biosynthesis; L-histidine from 5-phospho-alpha-D-ribose 1-diphosphate: step 6/9. The sequence is that of Imidazoleglycerol-phosphate dehydratase from Pelotomaculum thermopropionicum (strain DSM 13744 / JCM 10971 / SI).